The chain runs to 123 residues: Small ribosomal subunit protein uS12 (123 aa).

Positions 1–32 are disordered; it reads MPTINQLIRKPREAQKARDKAPALQSSPQKRG. Residues 10-21 are compositionally biased toward basic and acidic residues; the sequence is KPREAQKARDKA. Asp89 is modified (3-methylthioaspartic acid).

It belongs to the universal ribosomal protein uS12 family. Part of the 30S ribosomal subunit. Contacts proteins S8 and S17. May interact with IF1 in the 30S initiation complex.

With S4 and S5 plays an important role in translational accuracy. Its function is as follows. Interacts with and stabilizes bases of the 16S rRNA that are involved in tRNA selection in the A site and with the mRNA backbone. Located at the interface of the 30S and 50S subunits, it traverses the body of the 30S subunit contacting proteins on the other side and probably holding the rRNA structure together. The combined cluster of proteins S8, S12 and S17 appears to hold together the shoulder and platform of the 30S subunit. The chain is Small ribosomal subunit protein uS12 from Azorhizobium caulinodans (strain ATCC 43989 / DSM 5975 / JCM 20966 / LMG 6465 / NBRC 14845 / NCIMB 13405 / ORS 571).